A 165-amino-acid polypeptide reads, in one-letter code: 2-C-methyl-D-erythritol 2,4-cyclodiphosphate synthase (165 aa).

Residues aspartate 8 and histidine 10 each contribute to the a divalent metal cation site. 4-CDP-2-C-methyl-D-erythritol 2-phosphate contacts are provided by residues 8-10 (DVH) and 34-35 (HS). Histidine 42 provides a ligand contact to a divalent metal cation. Residues 56–58 (DIG), 61–65 (FPDTD), 100–106 (AQAPKMA), 132–135 (TTTE), phenylalanine 139, and arginine 142 contribute to the 4-CDP-2-C-methyl-D-erythritol 2-phosphate site.

The protein belongs to the IspF family. In terms of assembly, homotrimer. It depends on a divalent metal cation as a cofactor.

It carries out the reaction 4-CDP-2-C-methyl-D-erythritol 2-phosphate = 2-C-methyl-D-erythritol 2,4-cyclic diphosphate + CMP. It functions in the pathway isoprenoid biosynthesis; isopentenyl diphosphate biosynthesis via DXP pathway; isopentenyl diphosphate from 1-deoxy-D-xylulose 5-phosphate: step 4/6. Its function is as follows. Involved in the biosynthesis of isopentenyl diphosphate (IPP) and dimethylallyl diphosphate (DMAPP), two major building blocks of isoprenoid compounds. Catalyzes the conversion of 4-diphosphocytidyl-2-C-methyl-D-erythritol 2-phosphate (CDP-ME2P) to 2-C-methyl-D-erythritol 2,4-cyclodiphosphate (ME-CPP) with a corresponding release of cytidine 5-monophosphate (CMP). The sequence is that of 2-C-methyl-D-erythritol 2,4-cyclodiphosphate synthase from Pectobacterium atrosepticum (strain SCRI 1043 / ATCC BAA-672) (Erwinia carotovora subsp. atroseptica).